A 569-amino-acid polypeptide reads, in one-letter code: Sulfite reductase [NADPH] hemoprotein beta-component (569 aa).

4 residues coordinate [4Fe-4S] cluster: Cys434, Cys440, Cys479, and Cys483. Cys483 contributes to the siroheme binding site.

It belongs to the nitrite and sulfite reductase 4Fe-4S domain family. In terms of assembly, alpha(8)-beta(8). The alpha component is a flavoprotein, the beta component is a hemoprotein. Siroheme is required as a cofactor. The cofactor is [4Fe-4S] cluster.

It catalyses the reaction hydrogen sulfide + 3 NADP(+) + 3 H2O = sulfite + 3 NADPH + 4 H(+). It functions in the pathway sulfur metabolism; hydrogen sulfide biosynthesis; hydrogen sulfide from sulfite (NADPH route): step 1/1. Its function is as follows. Component of the sulfite reductase complex that catalyzes the 6-electron reduction of sulfite to sulfide. This is one of several activities required for the biosynthesis of L-cysteine from sulfate. The chain is Sulfite reductase [NADPH] hemoprotein beta-component from Staphylococcus saprophyticus subsp. saprophyticus (strain ATCC 15305 / DSM 20229 / NCIMB 8711 / NCTC 7292 / S-41).